Reading from the N-terminus, the 68-residue chain is ATP synthase F(0) complex subunit 8 (68 aa).

Residues 8-24 (VWPTIITSMLLTLFLLM) traverse the membrane as a helical segment. N6-acetyllysine; alternate is present on K54. At K54 the chain carries N6-succinyllysine; alternate. An N6-acetyllysine modification is found at K57.

The protein belongs to the ATPase protein 8 family. Component of the ATP synthase complex composed at least of ATP5F1A/subunit alpha, ATP5F1B/subunit beta, ATP5MC1/subunit c (homooctomer), MT-ATP6/subunit a, MT-ATP8/subunit 8, ATP5ME/subunit e, ATP5MF/subunit f, ATP5MG/subunit g, ATP5MK/subunit k, ATP5MJ/subunit j, ATP5F1C/subunit gamma, ATP5F1D/subunit delta, ATP5F1E/subunit epsilon, ATP5PF/subunit F6, ATP5PB/subunit b, ATP5PD/subunit d, ATP5PO/subunit OSCP. ATP synthase complex consists of a soluble F(1) head domain (subunits alpha(3) and beta(3)) - the catalytic core - and a membrane F(0) domain - the membrane proton channel (subunits c, a, 8, e, f, g, k and j). These two domains are linked by a central stalk (subunits gamma, delta, and epsilon) rotating inside the F1 region and a stationary peripheral stalk (subunits F6, b, d, and OSCP). Interacts with PRICKLE3.

Its subcellular location is the mitochondrion membrane. Subunit 8, of the mitochondrial membrane ATP synthase complex (F(1)F(0) ATP synthase or Complex V) that produces ATP from ADP in the presence of a proton gradient across the membrane which is generated by electron transport complexes of the respiratory chain. ATP synthase complex consist of a soluble F(1) head domain - the catalytic core - and a membrane F(1) domain - the membrane proton channel. These two domains are linked by a central stalk rotating inside the F(1) region and a stationary peripheral stalk. During catalysis, ATP synthesis in the catalytic domain of F(1) is coupled via a rotary mechanism of the central stalk subunits to proton translocation. In vivo, can only synthesize ATP although its ATP hydrolase activity can be activated artificially in vitro. Part of the complex F(0) domain. The protein is ATP synthase F(0) complex subunit 8 of Symphalangus syndactylus (Siamang).